The primary structure comprises 408 residues: Transmembrane protein 237 (408 aa).

Positions 1-14 are enriched in basic and acidic residues; sequence MRTDSGARLEEGHL. The tract at residues 1–137 is disordered; the sequence is MRTDSGARLE…RRKTKKTQPA (137 aa). 2 positions are modified to phosphoserine: serine 25 and serine 49. Basic and acidic residues predominate over residues 60 to 77; sequence RPSEGNEPSTKELKEHPE. Residues 95–106 are compositionally biased toward low complexity; that stretch reads TSSTQKKSSSSS. 4 helical membrane-spanning segments follow: residues 227–247, 268–288, 303–323, and 358–378; these read MIGL…IVVI, LAYP…ISAF, FLAL…LILS, and WIVV…FLSY.

The protein belongs to the TMEM237 family. In terms of assembly, part of the tectonic-like complex (also named B9 complex). Interacts with TMEM107.

It is found in the membrane. It localises to the cell projection. The protein localises to the cilium. Functionally, component of the transition zone in primary cilia. Required for ciliogenesis. This chain is Transmembrane protein 237 (TMEM237), found in Homo sapiens (Human).